The primary structure comprises 309 residues: D-alanine--D-alanine ligase (309 aa).

The region spanning 105–304 (KQIWHSVGLP…FNDLVERILA (200 aa)) is the ATP-grasp domain. 135–190 (LQELGGRVIVKPAREGSSIGMSIADNGRSLALALQHAAEFDDDLLVEQWVEGAEYT) lines the ATP pocket. Asp-258, Glu-271, and Asn-273 together coordinate Mg(2+).

The protein belongs to the D-alanine--D-alanine ligase family. Requires Mg(2+) as cofactor. Mn(2+) is required as a cofactor.

It localises to the cytoplasm. The enzyme catalyses 2 D-alanine + ATP = D-alanyl-D-alanine + ADP + phosphate + H(+). It participates in cell wall biogenesis; peptidoglycan biosynthesis. Functionally, cell wall formation. This Idiomarina loihiensis (strain ATCC BAA-735 / DSM 15497 / L2-TR) protein is D-alanine--D-alanine ligase.